An 81-amino-acid polypeptide reads, in one-letter code: uncharacterized protein (81 aa).

This is an uncharacterized protein from Dictyostelium discoideum (Social amoeba).